The following is a 203-amino-acid chain: MAEGQVLVLDGRGHLLGRLAAIVAKQVLLGRKVVVVRCEGINISGNFYRNKLKYLAFLRKRMNTNPSRGPYHFRAPSRIFWRTVRGMLPHKTKRGQAALDRLKVFDGIPPPYDKKKRMVVPAALKVVRLKPTRKFAYLGRLAHEVGWKYQAVTATLEEKRKEKAKIHYRKKKQLMRLRKQAEKNVEKKISKFTDVLKTHGLLV.

An N-acetylalanine modification is found at Ala-2. Arg-59 bears the Citrulline mark. Ser-77 bears the Phosphoserine mark. Residue Arg-140 is modified to Citrulline. Residue Lys-191 is modified to N6-acetyllysine.

The protein belongs to the universal ribosomal protein uL13 family. As to quaternary structure, component of the 60S ribosome. Component of the GAIT complex. Interacts with EIF4G1. Post-translationally, phosphorylation at Ser-77 upon interferon-gamma treatment in monocytes involves a DAPK1-DAPK3 kinase cascade and is causing release from the ribosome, association with the GAIT complex and subsequent involvement in transcript-selective translation inhibition. Citrullinated by PADI4.

It localises to the cytoplasm. Associated with ribosomes but is not required for canonical ribosome function and has extra-ribosomal functions. Component of the GAIT (gamma interferon-activated inhibitor of translation) complex which mediates interferon-gamma-induced transcript-selective translation inhibition in inflammation processes. Upon interferon-gamma activation and subsequent phosphorylation dissociates from the ribosome and assembles into the GAIT complex which binds to stem loop-containing GAIT elements in the 3'-UTR of diverse inflammatory mRNAs (such as ceruplasmin) and suppresses their translation. In the GAIT complex interacts with m7G cap-bound eIF4G at or near the eIF3-binding site and blocks the recruitment of the 43S ribosomal complex. Involved in methylation of rRNA. This chain is Large ribosomal subunit protein uL13 (RPL13A), found in Oryctolagus cuniculus (Rabbit).